We begin with the raw amino-acid sequence, 69 residues long: Putative membrane protein insertion efficiency factor (69 aa).

It belongs to the UPF0161 family.

Its subcellular location is the cell membrane. Its function is as follows. Could be involved in insertion of integral membrane proteins into the membrane. This is Putative membrane protein insertion efficiency factor from Thermoanaerobacter pseudethanolicus (strain ATCC 33223 / 39E) (Clostridium thermohydrosulfuricum).